The primary structure comprises 73 residues: MGMSGSSGLVHVLMLLLLLSILFHHTESTLPSDSEQLSITGRRMMANYKPNTAVETPPSRSRRGGGGQNTGAD.

The signal sequence occupies residues 1-28 (MGMSGSSGLVHVLMLLLLLSILFHHTES). The tract at residues 48–73 (YKPNTAVETPPSRSRRGGGGQNTGAD) is disordered. Positions 53 to 67 (AVETPPSRSRRGGGG) match the SCOOP motif motif. Positions 59 to 61 (SRS) match the SxS motif essential for MIK2 binding motif. A compositionally biased stretch (gly residues) spans 64-73 (GGGGQNTGAD).

The protein belongs to the serine rich endogenous peptide (SCOOP) phytocytokine family. Interacts with MIK2 (via extracellular leucine-rich repeat domain); this interaction triggers the formation of complex between MIK2 and the BAK1/SERK3 and SERK4 coreceptors, and subsequent BAK1 activation by phosphorylation. Mostly expressed in leaves and flowers, and, to a lower extent, in seedlings shoots.

The protein localises to the cell membrane. Its subcellular location is the secreted. The protein resides in the extracellular space. It is found in the apoplast. Brassicaceae-specific phytocytokine (plant endogenous peptide released into the apoplast) perceived by MIK2 in a BAK1/SERK3 and SERK4 coreceptors-dependent manner, that modulates various physiological and antimicrobial processes including growth prevention and reactive oxygen species (ROS) response regulation. The sequence is that of Serine rich endogenous peptide 1 from Arabidopsis thaliana (Mouse-ear cress).